The chain runs to 117 residues: Large ribosomal subunit protein bL20c (117 aa).

This sequence belongs to the bacterial ribosomal protein bL20 family.

The protein localises to the plastid. It localises to the chloroplast. Its function is as follows. Binds directly to 23S ribosomal RNA and is necessary for the in vitro assembly process of the 50S ribosomal subunit. It is not involved in the protein synthesizing functions of that subunit. The protein is Large ribosomal subunit protein bL20c of Calycanthus floridus var. glaucus (Eastern sweetshrub).